The sequence spans 880 residues: Alanine--tRNA ligase (880 aa).

Residues H567, H571, C669, and H673 each contribute to the Zn(2+) site.

The protein belongs to the class-II aminoacyl-tRNA synthetase family. It depends on Zn(2+) as a cofactor.

It is found in the cytoplasm. The enzyme catalyses tRNA(Ala) + L-alanine + ATP = L-alanyl-tRNA(Ala) + AMP + diphosphate. Its function is as follows. Catalyzes the attachment of alanine to tRNA(Ala) in a two-step reaction: alanine is first activated by ATP to form Ala-AMP and then transferred to the acceptor end of tRNA(Ala). Also edits incorrectly charged Ser-tRNA(Ala) and Gly-tRNA(Ala) via its editing domain. The polypeptide is Alanine--tRNA ligase (Bacillus anthracis).